Here is a 181-residue protein sequence, read N- to C-terminus: Large ribosomal subunit protein bL19 (181 aa).

Positions 162–173 (EKKAAAEAEAAK) are enriched in basic and acidic residues. The disordered stretch occupies residues 162–181 (EKKAAAEAEAAKAAEATPAE).

The protein belongs to the bacterial ribosomal protein bL19 family.

Functionally, this protein is located at the 30S-50S ribosomal subunit interface and may play a role in the structure and function of the aminoacyl-tRNA binding site. The sequence is that of Large ribosomal subunit protein bL19 from Mesorhizobium japonicum (strain LMG 29417 / CECT 9101 / MAFF 303099) (Mesorhizobium loti (strain MAFF 303099)).